The following is a 522-amino-acid chain: UPF0288 protein MTH_1865 (522 aa).

This sequence belongs to the UPF0288 family.

In Methanothermobacter thermautotrophicus (strain ATCC 29096 / DSM 1053 / JCM 10044 / NBRC 100330 / Delta H) (Methanobacterium thermoautotrophicum), this protein is UPF0288 protein MTH_1865.